Reading from the N-terminus, the 124-residue chain is Small ribosomal subunit protein uS13 (124 aa).

Positions 103 to 117 (KCNARTRKGPRKTVA) are enriched in basic residues. A disordered region spans residues 103–124 (KCNARTRKGPRKTVANKKIETK).

The protein belongs to the universal ribosomal protein uS13 family. As to quaternary structure, part of the 30S ribosomal subunit. Forms a loose heterodimer with protein S19. Forms two bridges to the 50S subunit in the 70S ribosome.

Its function is as follows. Located at the top of the head of the 30S subunit, it contacts several helices of the 16S rRNA. In the 70S ribosome it contacts the 23S rRNA (bridge B1a) and protein L5 of the 50S subunit (bridge B1b), connecting the 2 subunits; these bridges are implicated in subunit movement. Contacts the tRNAs in the A and P-sites. The sequence is that of Small ribosomal subunit protein uS13 from Malacoplasma penetrans (strain HF-2) (Mycoplasma penetrans).